A 179-amino-acid chain; its full sequence is Large ribosomal subunit protein bL17 (179 aa).

The tract at residues 123–179 (RTRGTDTLPDTVTDTGPDSAPDPVPGSEPGSAAGDLPDADTAPADPGESSSNQRVIR) is disordered. Positions 154–168 (AAGDLPDADTAPADP) are enriched in low complexity. The segment covering 170 to 179 (ESSSNQRVIR) has biased composition (polar residues).

This sequence belongs to the bacterial ribosomal protein bL17 family. Part of the 50S ribosomal subunit. Contacts protein L32.

In Tropheryma whipplei (strain Twist) (Whipple's bacillus), this protein is Large ribosomal subunit protein bL17.